The chain runs to 489 residues: Diaminopimelate decarboxylase 2, chloroplastic (489 aa).

The transit peptide at 1 to 50 directs the protein to the chloroplast; that stretch reads MAAVTQFLSQPSSIRGTLNQYQLNQTSLSRIPFLSLKSTLKPLKRLSVKA. An N-acetylalanine modification is found at Ala-51. Lys-130 is subject to N6-(pyridoxal phosphate)lysine. Pyridoxal 5'-phosphate-binding positions include Gly-309 and 345–348; that span reads EPGR. 3 residues coordinate substrate: Arg-348, Arg-384, and Tyr-388. Cys-416 serves as the catalytic Proton donor. Substrate contacts are provided by Glu-417 and Tyr-445. Tyr-445 contributes to the pyridoxal 5'-phosphate binding site.

Belongs to the Orn/Lys/Arg decarboxylase class-II family. LysA subfamily. As to quaternary structure, homodimer. Pyridoxal 5'-phosphate serves as cofactor.

The protein resides in the plastid. It localises to the chloroplast. The enzyme catalyses meso-2,6-diaminopimelate + H(+) = L-lysine + CO2. Its pathway is amino-acid biosynthesis; L-lysine biosynthesis via DAP pathway; L-lysine from DL-2,6-diaminopimelate: step 1/1. Its function is as follows. Specifically catalyzes the decarboxylation of meso-diaminopimelate (meso-DAP) to L-lysine. The polypeptide is Diaminopimelate decarboxylase 2, chloroplastic (LYSA2) (Arabidopsis thaliana (Mouse-ear cress)).